A 61-amino-acid polypeptide reads, in one-letter code: Large ribosomal subunit protein uL30 (61 aa).

This sequence belongs to the universal ribosomal protein uL30 family. As to quaternary structure, part of the 50S ribosomal subunit.

The sequence is that of Large ribosomal subunit protein uL30 from Shewanella halifaxensis (strain HAW-EB4).